The sequence spans 443 residues: UDP-N-acetylmuramate--L-alanine ligase (443 aa).

ATP is bound at residue 110-116; that stretch reads GAHGKTS.

The protein belongs to the MurCDEF family.

The protein localises to the cytoplasm. It catalyses the reaction UDP-N-acetyl-alpha-D-muramate + L-alanine + ATP = UDP-N-acetyl-alpha-D-muramoyl-L-alanine + ADP + phosphate + H(+). Its pathway is cell wall biogenesis; peptidoglycan biosynthesis. Cell wall formation. In Streptococcus agalactiae serotype III (strain NEM316), this protein is UDP-N-acetylmuramate--L-alanine ligase.